Consider the following 249-residue polypeptide: Elsinochromes biosynthesis cluster protein HP3 (249 aa).

Asn106 carries N-linked (GlcNAc...) asparagine glycosylation. Residues 138–158 form a helical membrane-spanning segment; the sequence is VVFAFMLSAWLVWLITVYAFA.

The protein resides in the membrane. Part of the gene cluster that mediates the biosynthesis of elsinochromes, pigments consisting of at least four interconvertible tautomers (A, B, C and D) that have a core phenolic quinone to which various side chains are attached and which play an important role in fungal pathogenesis. The non-reducing polyketide synthase PKS1 was proposed to iteratively catalyze decarboxylation between acetyl-CoA and malonyl-CoA subunits for polyketide chain elongation. The released polyketide undergoes cyclization to form an aromatic ring, and proceeds via serial modification steps to produce the heptaketide back- bone of elsinochrome. As elsinochrome has a symmetrical structure, two identical heptaketides are fused to form a core 1,2-dihydrobenzo-perylene ring structure, which can then be successively modified to produce the various derivatives of elsinochrome. Some of these reactions may be cooperatively carried out, at least in part, by the products of RDT1, OXR1 and PKS1. PRF1, embedded within the elsinochrome cluster possibly functions to stabilize some of the biosynthetic enzymes required for elsinochrome production. As prefoldin is a hexamer containing 2 a and 4 b subunits, additional prefoldin subunits, whose coding genes may not immediately link to the elsinochrome biosynthetic gene cluster, are required to fulfill the chaperone function. In addition, no methyltransferase-coding gene exists within the biosynthetic gene cluster, even though elsinochrome has four methyl groups at positions C3, C7, C8 and C12. Apparently, the identified gene cluster does not contain the entire entourage of genes responsible for elsinochrome biosynthesis. Once elsinochrome is synthesized, it must be exported outside the fungal cells, which is probably accomplished by the ECT1 transporter, to avoid toxicity. This Elsinoe fawcettii (Citrus scab fungus) protein is Elsinochromes biosynthesis cluster protein HP3.